A 177-amino-acid polypeptide reads, in one-letter code: uncharacterized protein (177 aa).

Residues 122 to 177 (LPFTRNGSGQQSNKLRDPKKGRTHKPKPSEKHKKNKTGKKGAQEKTHRSRSSRKGN) form a disordered region. 2 stretches are compositionally biased toward basic residues: residues 142–160 (GRTH…KTGK) and 168–177 (HRSRSSRKGN).

This is an uncharacterized protein from Saccharomyces cerevisiae (strain ATCC 204508 / S288c) (Baker's yeast).